The following is a 671-amino-acid chain: Phospholipid:diacylglycerol acyltransferase 1 (671 aa).

The interval 1 to 46 is disordered; it reads MPLIHRKKPTEKPSTPPSEEVVHDEDSQKKPHESSKSHHKKSNGGG. The Cytoplasmic segment spans residues 1 to 54; it reads MPLIHRKKPTEKPSTPPSEEVVHDEDSQKKPHESSKSHHKKSNGGGKWSCIDSC. The segment covering 20 to 36 has biased composition (basic and acidic residues); the sequence is EVVHDEDSQKKPHESSK. Residues 55 to 75 form a helical membrane-spanning segment; that stretch reads CWFIGCVCVTWWFLLFLYNAM. The Lumenal portion of the chain corresponds to 76–671; it reads PASFPQYVTE…EWSERIDLKL (596 aa). Asparagine 161 carries an N-linked (GlcNAc...) asparagine glycan. Residue serine 254 is the Acyl-ester intermediate of the active site. 2 N-linked (GlcNAc...) asparagine glycosylation sites follow: asparagine 381 and asparagine 434. Active-site charge relay system residues include aspartate 573 and histidine 626. N-linked (GlcNAc...) asparagine glycosylation is present at asparagine 647.

Belongs to the AB hydrolase superfamily. Lipase family. Ubiquitous. Highest expression in young developing seeds.

It is found in the membrane. The catalysed reaction is a glycerophospholipid + a 1,2-diacyl-sn-glycerol = a monoacylglycerophospholipid + a triacyl-sn-glycerol. It participates in glycerolipid metabolism; triacylglycerol biosynthesis. Its function is as follows. Triacylglycerol formation by an acyl-CoA independent pathway. The enzyme preferentially transfers acyl groups from the sn-2 position of a phospholipid to diacylglycerol, thus forming an sn-1-lysophospholipid. Involved in epoxy and hydroxy fatty acid accumulation in seeds. Has complementary functions with DAG1 that are essential for triacylglycerol synthesis and normal development of both seeds and pollen. This is Phospholipid:diacylglycerol acyltransferase 1 (PDAT1) from Arabidopsis thaliana (Mouse-ear cress).